We begin with the raw amino-acid sequence, 269 residues long: Diaminopimelate epimerase (269 aa).

Residues N15, Q49, and N66 each contribute to the substrate site. C75 functions as the Proton donor in the catalytic mechanism. Substrate is bound by residues 76 to 77 (GN), N155, N187, and 204 to 205 (ER). The Proton acceptor role is filled by C213. 214-215 (GS) lines the substrate pocket.

It belongs to the diaminopimelate epimerase family. As to quaternary structure, homodimer.

The protein resides in the cytoplasm. It carries out the reaction (2S,6S)-2,6-diaminopimelate = meso-2,6-diaminopimelate. Its pathway is amino-acid biosynthesis; L-lysine biosynthesis via DAP pathway; DL-2,6-diaminopimelate from LL-2,6-diaminopimelate: step 1/1. Functionally, catalyzes the stereoinversion of LL-2,6-diaminopimelate (L,L-DAP) to meso-diaminopimelate (meso-DAP), a precursor of L-lysine and an essential component of the bacterial peptidoglycan. The sequence is that of Diaminopimelate epimerase from Rickettsia bellii (strain OSU 85-389).